A 273-amino-acid chain; its full sequence is Tryptase (273 aa).

An N-terminal signal peptide occupies residues Met-1–Ala-18. Positions Ala-19 to Gly-28 are cleaved as a propeptide — activation peptide. Residues Ile-29 to Pro-270 enclose the Peptidase S1 domain. N-linked (GlcNAc...) asparagine glycosylation is present at Asn-49. An intrachain disulfide couples Cys-57 to Cys-73. Catalysis depends on charge relay system residues His-72 and Asp-119. Asn-130 carries N-linked (GlcNAc...) asparagine glycosylation. 3 disulfides stabilise this stretch: Cys-153–Cys-228, Cys-186–Cys-209, and Cys-218–Cys-246. Ser-222 serves as the catalytic Charge relay system.

It belongs to the peptidase S1 family. Tryptase subfamily.

The catalysed reaction is Preferential cleavage: Arg-|-Xaa, Lys-|-Xaa, but with more restricted specificity than trypsin.. In terms of biological role, tryptase is the major neutral protease present in mast cells and is secreted upon the coupled activation-degranulation response of this cell type. May play a role in innate immunity. This is Tryptase (Tpsab1) from Mus musculus (Mouse).